Consider the following 115-residue polypeptide: MLDIIKQIESQYIRTDLPNFNIGDTVKVHVRIKEGNRQRVQVFEGIVLKRQNGGVRETFTVRRVAYGVGVERTFPVNAPIIEKIQVVRRGKVRRAKLYYLRDRVGKAAKVKEILK.

The protein belongs to the bacterial ribosomal protein bL19 family.

Its function is as follows. This protein is located at the 30S-50S ribosomal subunit interface and may play a role in the structure and function of the aminoacyl-tRNA binding site. The chain is Large ribosomal subunit protein bL19 from Clostridium kluyveri (strain ATCC 8527 / DSM 555 / NBRC 12016 / NCIMB 10680 / K1).